A 128-amino-acid chain; its full sequence is Large ribosomal subunit protein bL17 (128 aa).

The protein belongs to the bacterial ribosomal protein bL17 family. In terms of assembly, part of the 50S ribosomal subunit. Contacts protein L32.

This is Large ribosomal subunit protein bL17 from Ehrlichia ruminantium (strain Gardel).